The chain runs to 331 residues: Homoserine O-succinyltransferase (331 aa).

Cys141 acts as the Acyl-thioester intermediate in catalysis. Positions 162 and 190 each coordinate substrate. The active-site Proton acceptor is the His233. The active site involves Glu235. A substrate-binding site is contributed by Arg247.

This sequence belongs to the MetA family.

Its subcellular location is the cytoplasm. It carries out the reaction L-homoserine + succinyl-CoA = O-succinyl-L-homoserine + CoA. The protein operates within amino-acid biosynthesis; L-methionine biosynthesis via de novo pathway; O-succinyl-L-homoserine from L-homoserine: step 1/1. Functionally, transfers a succinyl group from succinyl-CoA to L-homoserine, forming succinyl-L-homoserine. The protein is Homoserine O-succinyltransferase of Methylorubrum extorquens (strain DSM 6343 / CIP 106787 / DM4) (Methylobacterium extorquens).